An 840-amino-acid chain; its full sequence is MVKEKKKADKKGDKSARSPSSPSDYPEFAKQDGNAPRQDASPSAAPALDVQPKDPGVKREVKSESLPNEDTTQYEEPVLTKLIVESYEGEKVRGLYEGEGFAIFQGGCTYQGMFSEGLMHGQGTYIWADGLKYEGDFVKNIPMNHGIFTWPDGSTYEGEVVGGMRHGFGMFKCSTQPVSYIGHWCHGKRHGKGSIYYNQEGTSWYEGDWIHNIRKGWGIRCYKSGNIYEGQWENNVRHGEGRMRWLTTNEEYTGQWKHGVQNGLGTHTWFLKRIPYSQYPLRNEYVGEFVNGYRHGHGKFYYASGAMYEGEWVSNKKHGMGRLTFKNGRVYDGPFSKDHMVAFPNLEGEVMSYPDSTSECAFGCQWCRPSASAEIMRKLDGNESNSLLGSSLELDLSLLLKMYPERDQSEEKKQVEYAILRNITELRRIYNFYSSLGCDRSLDNTFLMTKLHFWRFLKDCKFHHHNITLADMDRVLGANNDIPVEEIHSPFTTLLLRTFLNYLLQLAYHIHHKEYQDRSPSLFLCFKKLMNENIRPNACRVKGRLFCEAQRTLYSMTYVDKCWEIYTAHCRPNAAPPHELTMSTRHFLWMLRSFKIINKELTATKFVEVIAEDNPSMYDGIDSNFELELVFLEFFEALLSFALICVPEPPTKFCSDFPNDDLSVNKAGSTYPVTAQNTQNRSPSAVASQESDIQFSSTKSSSSKLGVLVDISKIRKSEPKIKKSVSDGTTSKVNFKSAGKGLTFLLSQSAHKHEETLKEKVKENRLHNEAMALQRKMENEELEARLNSLREEEAKRQDYEVDITVIKEPVDAPSSSFTPSPPKEDTVVSSKSITSKKKKK.

2 stretches are compositionally biased toward basic and acidic residues: residues 1 to 16 (MVKE…DKSA) and 51 to 63 (QPKD…EVKS). The tract at residues 1 to 74 (MVKEKKKADK…SLPNEDTTQY (74 aa)) is disordered. MORN repeat units lie at residues 86–108 (SYEG…QGGC), 109–131 (TYQG…ADGL), 132–154 (KYEG…PDGS), 155–177 (TYEG…STQP), 179–201 (SYIG…NQEG), 204–226 (WYEG…KSGN), 227–249 (IYEG…LTTN), 251–273 (EYTG…FLKR), 284–306 (EYVG…ASGA), and 307–329 (MYEG…KNGR). Residues 758–801 (KEKVKENRLHNEAMALQRKMENEELEARLNSLREEEAKRQDYEV) adopt a coiled-coil conformation. A disordered region spans residues 810-840 (VDAPSSSFTPSPPKEDTVVSSKSITSKKKKK).

In terms of assembly, interacts with RSPH6A. Does not appear to be part of the axonemal radial spoke complexes 1 or 2.

It localises to the cytoplasm. Its subcellular location is the cytoskeleton. The protein resides in the cilium axoneme. It is found in the cell projection. The protein localises to the cilium. It localises to the flagellum. Its function is as follows. May function as part of the axonemal radial spoke complex 3 (RS3). Radial spoke complexes are important for ciliary motility. In Bos taurus (Bovine), this protein is Radial spoke head 10 homolog B (RSPH10B).